Consider the following 110-residue polypeptide: UPF0060 membrane protein Mfla_2554 (110 aa).

4 consecutive transmembrane segments (helical) span residues Val-7 to Trp-27, Ser-33 to Leu-53, Val-61 to Asp-81, and Ile-83 to Ile-103.

The protein belongs to the UPF0060 family.

The protein resides in the cell inner membrane. This Methylobacillus flagellatus (strain ATCC 51484 / DSM 6875 / VKM B-1610 / KT) protein is UPF0060 membrane protein Mfla_2554.